The following is a 433-amino-acid chain: V-type ATP synthase beta chain (433 aa).

The protein belongs to the ATPase alpha/beta chains family.

Functionally, produces ATP from ADP in the presence of a proton gradient across the membrane. The V-type beta chain is a regulatory subunit. This Borrelia turicatae (strain 91E135) protein is V-type ATP synthase beta chain.